We begin with the raw amino-acid sequence, 307 residues long: Murein tetrapeptide carboxypeptidase (307 aa).

Catalysis depends on Ser-115, which acts as the Nucleophile. Active-site charge relay system residues include Glu-217 and His-285.

The protein belongs to the peptidase S66 family. As to quaternary structure, homodimer.

The protein localises to the cytoplasm. It carries out the reaction N-acetyl-D-glucosaminyl-N-acetylmuramoyl-L-alanyl-meso-2,6-diaminoheptanedioyl-D-alanine + H2O = N-acetyl-D-glucosaminyl-N-acetylmuramoyl-L-alanyl-meso-2,6-diaminoheptanedioate + D-alanine. The protein operates within cell wall biogenesis; peptidoglycan recycling. In terms of biological role, releases the terminal D-alanine residue from the cytoplasmic disaccharide-tetrapeptide GlcNAc-MurNAc-L-Ala-gamma-D-Glu-meso-Dap-D-Ala, which is a murein turnover product. Probably also act on free tetrapetide. May be involved in murein recycling. This Pseudomonas aeruginosa (strain ATCC 15692 / DSM 22644 / CIP 104116 / JCM 14847 / LMG 12228 / 1C / PRS 101 / PAO1) protein is Murein tetrapeptide carboxypeptidase.